We begin with the raw amino-acid sequence, 160 residues long: Lipoprotein signal peptidase (160 aa).

The next 3 helical transmembrane spans lie at 7 to 27 (VIYY…KWLV), 61 to 81 (GQFW…IIYI), and 91 to 111 (AGIG…DRVF). Catalysis depends on residues Asp-117 and Asp-135. A helical membrane pass occupies residues 133 to 153 (IADSALTVGVILLFIHMFFFA).

The protein belongs to the peptidase A8 family.

The protein resides in the cell membrane. The enzyme catalyses Release of signal peptides from bacterial membrane prolipoproteins. Hydrolyzes -Xaa-Yaa-Zaa-|-(S,diacylglyceryl)Cys-, in which Xaa is hydrophobic (preferably Leu), and Yaa (Ala or Ser) and Zaa (Gly or Ala) have small, neutral side chains.. Its pathway is protein modification; lipoprotein biosynthesis (signal peptide cleavage). In terms of biological role, this protein specifically catalyzes the removal of signal peptides from prolipoproteins. This is Lipoprotein signal peptidase from Geobacillus thermodenitrificans (strain NG80-2).